The chain runs to 418 residues: tRNA-2-methylthio-N(6)-dimethylallyladenosine synthase (418 aa).

An MTTase N-terminal domain is found at 2 to 118 (PGYYLWTIGC…WREIPEGFIL (117 aa)). Positions 11, 47, 81, 134, 138, and 141 each coordinate [4Fe-4S] cluster. Positions 120–351 (LRPPVSANVT…EDLQKETVGK (232 aa)) constitute a Radical SAM core domain. A TRAM domain is found at 346–414 (KETVGKANAA…PWSLQAKLVN (69 aa)).

The protein belongs to the methylthiotransferase family. MiaB subfamily. As to quaternary structure, monomer. The cofactor is [4Fe-4S] cluster.

Its subcellular location is the cytoplasm. The catalysed reaction is N(6)-dimethylallyladenosine(37) in tRNA + (sulfur carrier)-SH + AH2 + 2 S-adenosyl-L-methionine = 2-methylsulfanyl-N(6)-dimethylallyladenosine(37) in tRNA + (sulfur carrier)-H + 5'-deoxyadenosine + L-methionine + A + S-adenosyl-L-homocysteine + 2 H(+). Its function is as follows. Catalyzes the methylthiolation of N6-(dimethylallyl)adenosine (i(6)A), leading to the formation of 2-methylthio-N6-(dimethylallyl)adenosine (ms(2)i(6)A) at position 37 in tRNAs that read codons beginning with uridine. The sequence is that of tRNA-2-methylthio-N(6)-dimethylallyladenosine synthase from Dehalococcoides mccartyi (strain ATCC BAA-2100 / JCM 16839 / KCTC 5957 / BAV1).